The primary structure comprises 124 residues: MATINQLVRKPRAKQVVKSNVPALAACPQKRGVCTRVYTTTPRKPNSALRKVCRVRLTNGFEVTSYIGGEGHNLQEHSVVLIRGGRVKDLPGVRYHTVRGALDCAGVNDRKQARSKYGVKRPKS.

Asp-89 bears the 3-methylthioaspartic acid mark.

It belongs to the universal ribosomal protein uS12 family. In terms of assembly, part of the 30S ribosomal subunit. Contacts proteins S8 and S17. May interact with IF1 in the 30S initiation complex.

With S4 and S5 plays an important role in translational accuracy. Functionally, interacts with and stabilizes bases of the 16S rRNA that are involved in tRNA selection in the A site and with the mRNA backbone. Located at the interface of the 30S and 50S subunits, it traverses the body of the 30S subunit contacting proteins on the other side and probably holding the rRNA structure together. The combined cluster of proteins S8, S12 and S17 appears to hold together the shoulder and platform of the 30S subunit. The protein is Small ribosomal subunit protein uS12 of Vibrio cholerae serotype O1 (strain ATCC 39541 / Classical Ogawa 395 / O395).